Reading from the N-terminus, the 171-residue chain is CDP-archaeol synthase (171 aa).

Helical transmembrane passes span Ile-7–Val-27, Gly-54–Pro-74, Val-84–Ile-104, Pro-115–Val-135, and Gly-141–Ala-161.

The protein belongs to the CDP-archaeol synthase family. Requires Mg(2+) as cofactor.

The protein resides in the cell membrane. The catalysed reaction is 2,3-bis-O-(geranylgeranyl)-sn-glycerol 1-phosphate + CTP + H(+) = CDP-2,3-bis-O-(geranylgeranyl)-sn-glycerol + diphosphate. Its pathway is membrane lipid metabolism; glycerophospholipid metabolism. Functionally, catalyzes the formation of CDP-2,3-bis-(O-geranylgeranyl)-sn-glycerol (CDP-archaeol) from 2,3-bis-(O-geranylgeranyl)-sn-glycerol 1-phosphate (DGGGP) and CTP. This reaction is the third ether-bond-formation step in the biosynthesis of archaeal membrane lipids. The sequence is that of CDP-archaeol synthase from Thermococcus kodakarensis (strain ATCC BAA-918 / JCM 12380 / KOD1) (Pyrococcus kodakaraensis (strain KOD1)).